A 216-amino-acid polypeptide reads, in one-letter code: Ion-translocating oxidoreductase complex subunit G (216 aa).

Residues 14 to 34 (ALVLGSFGFLAASFVSIIYVI) form a helical membrane-spanning segment. Thr-181 is modified (FMN phosphoryl threonine).

The protein belongs to the RnfG family. In terms of assembly, the complex is composed of six subunits: RnfA, RnfB, RnfC, RnfD, RnfE and RnfG. It depends on FMN as a cofactor.

It is found in the cell inner membrane. In terms of biological role, part of a membrane-bound complex that couples electron transfer with translocation of ions across the membrane. The sequence is that of Ion-translocating oxidoreductase complex subunit G from Buchnera aphidicola subsp. Baizongia pistaciae (strain Bp).